Here is a 361-residue protein sequence, read N- to C-terminus: MAGKSPEEEHPVKTYGLAAHDSSGVLSPFKFSRRATLEDDVRFKVLYCGICHTDLHFAKNEWGISTYPLVPGHEIVGEVTEVGGKVTKVKVGDKVGVGCLVGPCRTCDNCRADLDNYCPKMVLTYASPNVDGTITYGGYSNEMVCNEHFIVRFPENLPLDGGAPLLCAGITVYSPMKYYGFAKPGSHIAVNGLGGLGHVAVKFAKAMGAKVTVISTSEGKKDDALNRLGADAFLLSSNPEALQAATGTFDGILNTISAKHAIIPLLGLLKSHGKLVLLGAPPEPLDLHSAPLLMGRKMVAGSSIGGLKETQEMLDFAGKHNITADIELISADNINTALERLAKGDVRYRFVLDVAKTLKAP.

Residues Cys-51, Thr-53, His-73, Cys-104, Cys-107, Cys-110, Cys-118, and Cys-167 each coordinate Zn(2+). Residues Thr-53 and His-73 each contribute to the an alcohol site. Residue Thr-53 participates in NAD(+) binding. NAD(+) contacts are provided by residues 192 to 197 (GLGGLG), Lys-221, 278 to 280 (LGA), and Lys-356.

This sequence belongs to the zinc-containing alcohol dehydrogenase family. Class-III subfamily. In terms of assembly, homodimer. Zn(2+) serves as cofactor.

This Catharanthus roseus (Madagascar periwinkle) protein is Alcohol dehydrogenase 9.